A 246-amino-acid chain; its full sequence is MRRGFGPLSLAFFLFLLALLTLPGDGNQGSVAGSCSCDRTISSGTQIPQGTLDHIRKYLKAFHRCPFFIRFQLQSKSVCGGSQDQWVRELVDCFERKECGTGHGKSFHHQKHLPQASTQTPEAAEGTPSDTSTPAHSQSTQHSTLPSGALSLNKEHTQPWEMTTLPSGYGLEARPEAEANEKQQDDRQQEAPGAGASTPAWVPVLSLLAIVFFLTAAMAYVLCNRRATQQNSAGLQLWYTPVEPRP.

The signal sequence occupies residues 1–26 (MRRGFGPLSLAFFLFLLALLTLPGDG). The Extracellular segment spans residues 27 to 201 (NQGSVAGSCS…PGAGASTPAW (175 aa)). Intrachain disulfides connect cysteine 35-cysteine 65 and cysteine 37-cysteine 79. 2 disordered regions span residues 104 to 150 (GKSF…SGAL) and 175 to 198 (PEAE…GAST). Residues 128 to 146 (PSDTSTPAHSQSTQHSTLP) are compositionally biased toward polar residues. A compositionally biased stretch (basic and acidic residues) spans 175–189 (PEAEANEKQQDDRQQ). The chain crosses the membrane as a helical span at residues 202-222 (VPVLSLLAIVFFLTAAMAYVL). The Cytoplasmic segment spans residues 223 to 246 (CNRRATQQNSAGLQLWYTPVEPRP).

It belongs to the intercrine alpha (chemokine CxC) family. Post-translationally, glycosylated. As to expression, widely expressed. Not detected in purified B- and T-cells.

It is found in the membrane. Its function is as follows. Induces a strong chemotactic response. Induces calcium mobilization. Binds to CXCR6/Bonzo. Also acts as a scavenger receptor on macrophages, which specifically binds to OxLDL (oxidized low density lipoprotein), suggesting that it may be involved in pathophysiology such as atherogenesis. In Mus musculus (Mouse), this protein is C-X-C motif chemokine 16 (Cxcl16).